The chain runs to 456 residues: Probable hexose phosphate transport protein (456 aa).

11 helical membrane passes run 34–54 (IFYS…SFTF), 70–90 (LGII…VSGV), 113–133 (IFFG…INGW), 161–181 (VWST…GIAI), 185–205 (GWRG…FILI), 257–277 (YVLS…IYVV), 302–322 (LCVS…GWLS), 331–351 (GPMN…LWGT), 362–382 (AFLF…GLAA), 394–414 (ASGF…YPLG), and 421–441 (GWHG…LFFL).

The protein belongs to the major facilitator superfamily. Organophosphate:Pi antiporter (OPA) (TC 2.A.1.4) family.

The protein localises to the cell membrane. In terms of biological role, transport protein for sugar phosphate uptake. The polypeptide is Probable hexose phosphate transport protein (Chlamydia muridarum (strain MoPn / Nigg)).